The chain runs to 271 residues: Phosphatidylglycerol--prolipoprotein diacylglyceryl transferase (271 aa).

The next 7 membrane-spanning stretches (helical) occupy residues 21-41 (ISVR…MWLA), 60-80 (LLFA…VLFY), 95-115 (VWTG…AMLW), 124-144 (FFGV…VGRL), 176-196 (SQLY…NWFI), 203-223 (GSVS…VEYV), and 230-250 (LGLF…MIIG). Arg143 contributes to the a 1,2-diacyl-sn-glycero-3-phospho-(1'-sn-glycerol) binding site.

It belongs to the Lgt family.

It is found in the cell inner membrane. The catalysed reaction is L-cysteinyl-[prolipoprotein] + a 1,2-diacyl-sn-glycero-3-phospho-(1'-sn-glycerol) = an S-1,2-diacyl-sn-glyceryl-L-cysteinyl-[prolipoprotein] + sn-glycerol 1-phosphate + H(+). Its pathway is protein modification; lipoprotein biosynthesis (diacylglyceryl transfer). In terms of biological role, catalyzes the transfer of the diacylglyceryl group from phosphatidylglycerol to the sulfhydryl group of the N-terminal cysteine of a prolipoprotein, the first step in the formation of mature lipoproteins. This is Phosphatidylglycerol--prolipoprotein diacylglyceryl transferase from Vibrio vulnificus (strain YJ016).